The following is a 395-amino-acid chain: Lipoyl synthase, mitochondrial (395 aa).

The N-terminal 14 residues, Met-1–Gln-14, are a transit peptide targeting the mitochondrion. Residues Cys-112, Cys-117, Cys-123, Cys-142, Cys-146, Cys-149, and Ser-357 each coordinate [4Fe-4S] cluster. The 220-residue stretch at Lys-127 to Leu-346 folds into the Radical SAM core domain.

This sequence belongs to the radical SAM superfamily. Lipoyl synthase family. [4Fe-4S] cluster serves as cofactor.

Its subcellular location is the mitochondrion. It carries out the reaction [[Fe-S] cluster scaffold protein carrying a second [4Fe-4S](2+) cluster] + N(6)-octanoyl-L-lysyl-[protein] + 2 oxidized [2Fe-2S]-[ferredoxin] + 2 S-adenosyl-L-methionine + 4 H(+) = [[Fe-S] cluster scaffold protein] + N(6)-[(R)-dihydrolipoyl]-L-lysyl-[protein] + 4 Fe(3+) + 2 hydrogen sulfide + 2 5'-deoxyadenosine + 2 L-methionine + 2 reduced [2Fe-2S]-[ferredoxin]. Its pathway is protein modification; protein lipoylation via endogenous pathway; protein N(6)-(lipoyl)lysine from octanoyl-[acyl-carrier-protein]: step 2/2. Catalyzes the radical-mediated insertion of two sulfur atoms into the C-6 and C-8 positions of the octanoyl moiety bound to the lipoyl domains of lipoate-dependent enzymes, thereby converting the octanoylated domains into lipoylated derivatives. This chain is Lipoyl synthase, mitochondrial, found in Debaryomyces hansenii (strain ATCC 36239 / CBS 767 / BCRC 21394 / JCM 1990 / NBRC 0083 / IGC 2968) (Yeast).